The sequence spans 442 residues: MPDQIPVRDTIFALSSGSLPSGIAVIRISGADTRAVLERMAGGLSEARFAKLTSIYSAEREVLDRALCLFFPAPASFTGEDCAELHLHGGRAVVAAVLNELAAFPGLRMAEAGEFTKRAFLNGKMNLTEAEALSDLIAAETEAQRRFALVNSSDMRKRLYDGWRRRLIHARAMIEAELDFADESDVPGSAGATVWEDIRRLRQEIVEHASSYRKAEIIRDGFQIVILGAPNAGKSSLLNALARRDVAIVTEEPGTTRDILEVSLDIDGTKVVLADTAGIREAAGRVEALGIERSLRRANEADLVLLLEDVTNPSTPEVPQGKPVITIGNKADLITDTPAASYNCLISAKTGLGLDRLMELISQASAGYSNFAGEILPFRERHVALLGQAADALEAGIDGENIGLELRAECLRLSSLALGRISGEIDVEDLLDAIFSTFCIGK.

Positions 27, 84, and 124 each coordinate (6S)-5-formyl-5,6,7,8-tetrahydrofolate. One can recognise a TrmE-type G domain in the interval G221–A366. Residues N231–S236, T250–T256, D275–G278, and N329–D332 each bind GTP. The Mg(2+) site is built by S235 and T256. K442 provides a ligand contact to (6S)-5-formyl-5,6,7,8-tetrahydrofolate.

The protein belongs to the TRAFAC class TrmE-Era-EngA-EngB-Septin-like GTPase superfamily. TrmE GTPase family. As to quaternary structure, homodimer. Heterotetramer of two MnmE and two MnmG subunits. It depends on K(+) as a cofactor.

The protein resides in the cytoplasm. Functionally, exhibits a very high intrinsic GTPase hydrolysis rate. Involved in the addition of a carboxymethylaminomethyl (cmnm) group at the wobble position (U34) of certain tRNAs, forming tRNA-cmnm(5)s(2)U34. The protein is tRNA modification GTPase MnmE of Chelativorans sp. (strain BNC1).